We begin with the raw amino-acid sequence, 310 residues long: Dopamine receptor-interacting protein 1 (310 aa).

In terms of assembly, interacts with DRD1.

In terms of biological role, could be a regulator of the dopamine receptor signaling pathway. The protein is Dopamine receptor-interacting protein 1 of Homo sapiens (Human).